The sequence spans 779 residues: Phosphoribosylformylglycinamidine synthase subunit PurL (779 aa).

Residue His52 is part of the active site. ATP contacts are provided by Tyr55 and Lys94. Glu96 contributes to the Mg(2+) binding site. Substrate is bound by residues 97-100 (SHNH) and Arg119. The active-site Proton acceptor is His98. A Mg(2+)-binding site is contributed by Asp120. Gln243 serves as a coordination point for substrate. Position 271 (Asp271) interacts with Mg(2+). 315 to 317 (ESQ) contacts substrate. Residues Asn523 and Gly560 each contribute to the ATP site. Asn561 contacts Mg(2+). Residue Ser563 participates in substrate binding.

It belongs to the FGAMS family. Monomer. Part of the FGAM synthase complex composed of 1 PurL, 1 PurQ and 2 PurS subunits.

The protein resides in the cytoplasm. The catalysed reaction is N(2)-formyl-N(1)-(5-phospho-beta-D-ribosyl)glycinamide + L-glutamine + ATP + H2O = 2-formamido-N(1)-(5-O-phospho-beta-D-ribosyl)acetamidine + L-glutamate + ADP + phosphate + H(+). Its pathway is purine metabolism; IMP biosynthesis via de novo pathway; 5-amino-1-(5-phospho-D-ribosyl)imidazole from N(2)-formyl-N(1)-(5-phospho-D-ribosyl)glycinamide: step 1/2. In terms of biological role, part of the phosphoribosylformylglycinamidine synthase complex involved in the purines biosynthetic pathway. Catalyzes the ATP-dependent conversion of formylglycinamide ribonucleotide (FGAR) and glutamine to yield formylglycinamidine ribonucleotide (FGAM) and glutamate. The FGAM synthase complex is composed of three subunits. PurQ produces an ammonia molecule by converting glutamine to glutamate. PurL transfers the ammonia molecule to FGAR to form FGAM in an ATP-dependent manner. PurS interacts with PurQ and PurL and is thought to assist in the transfer of the ammonia molecule from PurQ to PurL. The polypeptide is Phosphoribosylformylglycinamidine synthase subunit PurL (Prochlorococcus marinus (strain MIT 9215)).